A 268-amino-acid polypeptide reads, in one-letter code: Phosphatidylcholine synthase (268 aa).

The Cytoplasmic portion of the chain corresponds to M1–R27. A helical membrane pass occupies residues A28 to A48. The Periplasmic segment spans residues A49–R53. Residues W54–I74 traverse the membrane as a helical segment. Over A75–S88 the chain is Cytoplasmic. The helical transmembrane segment at G89–L109 threads the bilayer. At Y110–R112 the chain is on the periplasmic side. Residues G113–I133 traverse the membrane as a helical segment. Topologically, residues Y134–N145 are cytoplasmic. Residues F146 to P166 traverse the membrane as a helical segment. Residues G167–Q168 lie on the Periplasmic side of the membrane. Residues W169–I189 traverse the membrane as a helical segment. Residues H190 to T203 are Cytoplasmic-facing. The helical transmembrane segment at M204–F224 threads the bilayer. Topologically, residues Y225–K240 are periplasmic. A helical membrane pass occupies residues I241–P261. At N262–A268 the chain is on the cytoplasmic side.

Belongs to the CDP-alcohol phosphatidyltransferase class-I family. Mn(2+) serves as cofactor.

Its subcellular location is the cell inner membrane. The enzyme catalyses a CDP-1,2-diacyl-sn-glycerol + choline = a 1,2-diacyl-sn-glycero-3-phosphocholine + CMP + H(+). Functionally, condenses choline with CDP-diglyceride to produce phosphatidylcholine and CMP. The chain is Phosphatidylcholine synthase (pcs) from Mesorhizobium japonicum (strain LMG 29417 / CECT 9101 / MAFF 303099) (Mesorhizobium loti (strain MAFF 303099)).